A 227-amino-acid chain; its full sequence is Large ribosomal subunit protein uL1 (227 aa).

The protein belongs to the universal ribosomal protein uL1 family. As to quaternary structure, part of the 50S ribosomal subunit.

Its function is as follows. Binds directly to 23S rRNA. The L1 stalk is quite mobile in the ribosome, and is involved in E site tRNA release. Functionally, protein L1 is also a translational repressor protein, it controls the translation of the L11 operon by binding to its mRNA. The protein is Large ribosomal subunit protein uL1 of Tropheryma whipplei (strain TW08/27) (Whipple's bacillus).